Here is a 215-residue protein sequence, read N- to C-terminus: Large ribosomal subunit protein uL4 (215 aa).

The segment at 43-100 is disordered; the sequence is AAKRQGTHSTKTRGEVSGGGKKPYRQKGSGRARQGSTRAPQFTGGGTVHGPKPRDYSQ.

Belongs to the universal ribosomal protein uL4 family. In terms of assembly, part of the 50S ribosomal subunit.

In terms of biological role, one of the primary rRNA binding proteins, this protein initially binds near the 5'-end of the 23S rRNA. It is important during the early stages of 50S assembly. It makes multiple contacts with different domains of the 23S rRNA in the assembled 50S subunit and ribosome. Functionally, forms part of the polypeptide exit tunnel. The sequence is that of Large ribosomal subunit protein uL4 from Mycolicibacterium smegmatis (Mycobacterium smegmatis).